The chain runs to 427 residues: Glucose-6-phosphate isomerase (427 aa).

The active-site Proton donor is the Glu-277. Catalysis depends on residues His-298 and Lys-414.

The protein belongs to the GPI family.

Its subcellular location is the cytoplasm. It catalyses the reaction alpha-D-glucose 6-phosphate = beta-D-fructose 6-phosphate. The protein operates within carbohydrate biosynthesis; gluconeogenesis. It participates in carbohydrate degradation; glycolysis; D-glyceraldehyde 3-phosphate and glycerone phosphate from D-glucose: step 2/4. Functionally, catalyzes the reversible isomerization of glucose-6-phosphate to fructose-6-phosphate. This Mycoplasma capricolum subsp. capricolum (strain California kid / ATCC 27343 / NCTC 10154) protein is Glucose-6-phosphate isomerase.